Reading from the N-terminus, the 572-residue chain is Phosphoenolpyruvate-protein phosphotransferase (572 aa).

H190 serves as the catalytic Tele-phosphohistidine intermediate. 2 residues coordinate phosphoenolpyruvate: R297 and R333. Mg(2+) contacts are provided by E427 and D451. Phosphoenolpyruvate-binding positions include 450-451 (ND) and R461. C498 functions as the Proton donor in the catalytic mechanism.

It belongs to the PEP-utilizing enzyme family. As to quaternary structure, homodimer. The cofactor is Mg(2+).

Its subcellular location is the cytoplasm. The enzyme catalyses L-histidyl-[protein] + phosphoenolpyruvate = N(pros)-phospho-L-histidyl-[protein] + pyruvate. Its function is as follows. General (non sugar-specific) component of the phosphoenolpyruvate-dependent sugar phosphotransferase system (sugar PTS). This major carbohydrate active-transport system catalyzes the phosphorylation of incoming sugar substrates concomitantly with their translocation across the cell membrane. Enzyme I transfers the phosphoryl group from phosphoenolpyruvate (PEP) to the phosphoryl carrier protein (HPr). The polypeptide is Phosphoenolpyruvate-protein phosphotransferase (ptsI) (Mycoplasma genitalium (strain ATCC 33530 / DSM 19775 / NCTC 10195 / G37) (Mycoplasmoides genitalium)).